The primary structure comprises 479 residues: Phosphatidylinositol 4-kinase type 2-alpha (479 aa).

Methionine 1 is modified (N-acetylmethionine). Positions 1–58 are disordered; the sequence is MDETSPLVSPERAQPPEYTFPSGSGAHFPQVPGGAVRVAAAAGSGPSPPCSPGHDRER. 5 positions are modified to phosphoserine: serine 5, serine 9, serine 44, serine 47, and serine 51. The span at 31 to 45 shows a compositional bias: low complexity; it reads VPGGAVRVAAAAGSG. A PI3K/PI4K catalytic domain is found at 124–453; that stretch reads SIYPERIYQG…VQMPPVIVET (330 aa). The tract at residues 130-136 is G-loop; it reads IYQGSSG. ATP is bound by residues 131-137 and lysine 152; that span reads YQGSSGS. An important for substrate binding region spans residues 157-159; it reads EPY. The important for interaction with membranes stretch occupies residues 165–178; that stretch reads KWTKWLQKLCCPCC. Residues cysteine 174, cysteine 175, cysteine 177, and cysteine 178 are each lipidated (S-palmitoyl cysteine). Residue 261–264 participates in ATP binding; it reads QLFV. An important for interaction with membranes region spans residues 268 to 276; sequence KDADYWLRR. A catalytic loop region spans residues 305-313; that stretch reads RNTDRGNDN. Residues 344 to 364 are activation loop; sequence AIDNGLAFPLKHPDSWRAYPF. Residue aspartate 346 coordinates ATP. The interval 359–368 is important for interaction with membranes; sequence WRAYPFYWAW. Serine 462 carries the phosphoserine modification.

Belongs to the PI3/PI4-kinase family. Type II PI4K subfamily. As to quaternary structure, associates with the BLOC-1 and the AP-3 complexes; the BLOC-1 complex is required for optimal binding of PI4K2A to the AP-3 complex. Interacts with BLOC1S5 and DTNBP1. Interacts with ITCH. Interacts with FOS; this interaction may enhance phosphatidylinositol phosphorylation activity. Interacts with ATG9A. In terms of processing, palmitoylated by ZDHHC3 and ZDHHC7 in the CCPCC motif. Palmitoylation is cholesterol-dependent, and required for TGN localization. Post-translationally, ubiquitinated by ITCH; this does not lead to proteasomal degradation. As to expression, detected in brain (at protein level).

Its subcellular location is the golgi apparatus. The protein localises to the trans-Golgi network membrane. It is found in the membrane raft. The protein resides in the endosome. It localises to the endosome membrane. Its subcellular location is the cytoplasmic vesicle. The protein localises to the cell projection. It is found in the dendrite. The protein resides in the presynaptic cell membrane. It localises to the synapse. Its subcellular location is the synaptosome. The protein localises to the mitochondrion. It is found in the membrane. The protein resides in the cell membrane. It localises to the perikaryon. Its subcellular location is the neuron projection. The catalysed reaction is a 1,2-diacyl-sn-glycero-3-phospho-(1D-myo-inositol) + ATP = a 1,2-diacyl-sn-glycero-3-phospho-(1D-myo-inositol 4-phosphate) + ADP + H(+). In terms of biological role, membrane-bound phosphatidylinositol-4 kinase (PI4-kinase) that catalyzes the phosphorylation of phosphatidylinositol (PI) to phosphatidylinositol 4-phosphate (PI4P), a lipid that plays important roles in endocytosis, Golgi function, protein sorting and membrane trafficking and is required for prolonged survival of neurons. Besides, phosphorylation of phosphatidylinositol (PI) to phosphatidylinositol 4-phosphate (PI4P) is the first committed step in the generation of phosphatidylinositol 4,5-bisphosphate (PIP2), a precursor of the second messenger inositol 1,4,5-trisphosphate (InsP3). The chain is Phosphatidylinositol 4-kinase type 2-alpha (Pi4k2a) from Mus musculus (Mouse).